Here is a 75-residue protein sequence, read N- to C-terminus: MSSKAITLLLIALLFSLSLAQAARPLQPADSTKSVHVIPEKVHDEACEGVGEEECLMRRTLTAHVDYIYTQDHNP.

A signal peptide spans 1 to 22 (MSSKAITLLLIALLFSLSLAQA). A propeptide spanning residues 23 to 66 (ARPLQPADSTKSVHVIPEKVHDEACEGVGEEECLMRRTLTAHVD) is cleaved from the precursor. Sulfotyrosine is present on residues tyrosine 67 and tyrosine 69. Positions 72–75 (DHNP) are excised as a propeptide.

Belongs to the phytosulfokine family. Post-translationally, sulfation is important for activity and for the binding to a putative membrane receptor. Deletion of the sulfate groups of Tyr-67 and Tyr-69 resulted in compounds with respectively 0.6% and 4% of the activity. In terms of processing, PSK-alpha is produced by endopeptidase digestion. PSK-beta is produced from PSK-alpha by exopeptidase digestion.

It localises to the secreted. Functionally, promotes plant cell differentiation, organogenesis and somatic embryogenesis as well as cell proliferation. This Asparagus officinalis (Garden asparagus) protein is Phytosulfokines (PSK).